Reading from the N-terminus, the 603-residue chain is Dual specificity protein phosphatase CDC14A (603 aa).

Positions 7–162 (ELIGACEFMK…GLQHGFFDFE (156 aa)) are a. Residues 163 to 176 (TFDAEEYEHYERVE) form a linker region. A b region spans residues 177–343 (NGDFNWIVPG…QGDIFRSKLK (167 aa)). Positions 179–336 (DFNWIVPGKF…KQASLWVQGD (158 aa)) constitute a Tyrosine-protein phosphatase domain. The active-site Phosphocysteine intermediate is the C278. Phosphoserine is present on S484. A compositionally biased stretch (polar residues) spans 518–538 (NGSTQTPGRNYPELNNNQYTR). The segment at 518–583 (NGSTQTPGRN…RPSFPGSLSS (66 aa)) is disordered. 2 stretches are compositionally biased toward low complexity: residues 539-558 (SSNS…LNSS) and 573-583 (LRPSFPGSLSS). S592 carries the phosphoserine modification.

Belongs to the protein-tyrosine phosphatase family. Non-receptor class CDC14 subfamily. Interacts with KIF20A. Interaction is required to localize CDC14 to the midzone of the mitotic spindle. As to expression, expressed in the inner ear.

The protein localises to the nucleus. Its subcellular location is the cytoplasm. It is found in the cytoskeleton. It localises to the microtubule organizing center. The protein resides in the centrosome. The protein localises to the spindle. Its subcellular location is the cell projection. It is found in the kinocilium. It localises to the spindle pole. The protein resides in the stereocilium. The enzyme catalyses O-phospho-L-tyrosyl-[protein] + H2O = L-tyrosyl-[protein] + phosphate. The catalysed reaction is O-phospho-L-seryl-[protein] + H2O = L-seryl-[protein] + phosphate. It carries out the reaction O-phospho-L-threonyl-[protein] + H2O = L-threonyl-[protein] + phosphate. Functionally, dual-specificity phosphatase. Required for centrosome separation and productive cytokinesis during cell division. Dephosphorylates SIRT2 around early anaphase. May dephosphorylate the APC subunit FZR1/CDH1, thereby promoting APC-FZR1 dependent degradation of mitotic cyclins and subsequent exit from mitosis. Required for normal hearing. The polypeptide is Dual specificity protein phosphatase CDC14A (Cdc14a) (Mus musculus (Mouse)).